The chain runs to 541 residues: 5' exonuclease Apollo (541 aa).

Residue lysine 334 forms a Glycyl lysine isopeptide (Lys-Gly) (interchain with G-Cter in SUMO2) linkage. The interval 455–475 is disordered; it reads PLLSRGDSGSPARGNQSDCVG. The TBM motif lies at 492 to 507; that stretch reads ESRGLALKYLLTPVHF.

It belongs to the DNA repair metallo-beta-lactamase (DRMBL) family. Interacts with MUS81, MRE11 and FANCD2. Interacts with HSPA2, HSPA8 and HSPA14. Interacts with SPAG5. Interacts with TERF2; the interaction is direct. Ubiquitinated, leading to its degradation. Interaction with TERF2 protects it from ubiquitination.

The protein localises to the chromosome. It localises to the telomere. Its subcellular location is the nucleus. The protein resides in the cytoplasm. It is found in the cytoskeleton. The protein localises to the microtubule organizing center. It localises to the centrosome. The enzyme catalyses a beta-lactam + H2O = a substituted beta-amino acid. 5'-3' exonuclease that plays a central role in telomere maintenance and protection during S-phase. Participates in the protection of telomeres against non-homologous end-joining (NHEJ)-mediated repair, thereby ensuring that telomeres do not fuse. Plays a key role in telomeric loop (T loop) formation by being recruited by TERF2 at the leading end telomeres and by processing leading-end telomeres immediately after their replication via its exonuclease activity: generates 3' single-stranded overhang at the leading end telomeres avoiding blunt leading-end telomeres that are vulnerable to end-joining reactions and expose the telomere end in a manner that activates the DNA repair pathways. Together with TERF2, required to protect telomeres from replicative damage during replication by controlling the amount of DNA topoisomerase (TOP1, TOP2A and TOP2B) needed for telomere replication during fork passage and prevent aberrant telomere topology. Also involved in response to DNA damage: plays a role in response to DNA interstrand cross-links (ICLs) by facilitating double-strand break formation. In case of spindle stress, involved in prophase checkpoint. Possesses beta-lactamase activity, catalyzing the hydrolysis of penicillin G and nitrocefin. Exhibits no activity towards other beta-lactam antibiotic classes including cephalosporins (cefotaxime) and carbapenems (imipenem). The chain is 5' exonuclease Apollo (Dclre1b) from Mus musculus (Mouse).